The following is a 265-amino-acid chain: V0 assembly protein 1 (265 aa).

The signal sequence occupies residues 1-24 (MVFGQLYALFIFTLSCCISKTVQA). Over 25-223 (DSSKESSSFI…ILSSIWTEGL (199 aa)) the chain is Vacuolar. Residues asparagine 69, asparagine 104, and asparagine 172 are each glycosylated (N-linked (GlcNAc...) asparagine). The helical transmembrane segment at 224–244 (LMCLIVSALLLFILIVALSWI) threads the bilayer. The Cytoplasmic segment spans residues 245-265 (SNLDITYGALEKSTNPIKKNN). An ER retention motif motif is present at residues 262-265 (KKNN).

Belongs to the VOA1 family. As to quaternary structure, V-ATPase is a heteromultimeric enzyme composed of a peripheral catalytic V1 complex (components A to H) attached to an integral membrane V0 proton pore complex (components: a, c, c', c'', d, e, f and VOA1). Interacts with VMA21. Associates with the assembling V0 complex.

It is found in the vacuole membrane. It localises to the endoplasmic reticulum membrane. Functionally, accessory component of the V0 complex of vacuolar(H+)-ATPase (V-ATPase), a multisubunit enzyme composed of a peripheral complex (V1) that hydrolyzes ATP and a membrane integral complex (V0) that translocates protons. V-ATPase is responsible for acidifying and maintaining the pH of intracellular compartments. Functions with VMA21 in assembly of the V0 complex. This Saccharomyces cerevisiae (strain ATCC 204508 / S288c) (Baker's yeast) protein is V0 assembly protein 1 (VOA1).